Here is a 531-residue protein sequence, read N- to C-terminus: Polyamine transporter PUT1 (531 aa).

Residues 1–76 are disordered; that stretch reads MADTGGRPEV…LPDGDAGGPM (76 aa). A compositionally biased stretch (low complexity) spans 17–33; sequence SPGHPAASTTAAAAADL. The span at 34-44 shows a compositional bias: basic and acidic residues; the sequence is GHADTGQEKPT. Transmembrane regions (helical) follow at residues 83 to 103, 113 to 133, 147 to 167, 193 to 213, 224 to 244, 262 to 284, 296 to 316, 341 to 361, 391 to 411, 414 to 434, 453 to 473, and 476 to 496; these read VSMIPLIFLIFYEVSGGPFGI, LLAIIGFLVLPVIWSIPEALI, YVVWVASALGPYWGFQQGWMK, LGGGAPRAFAVVGLTAVLTLL, VAICLGVFSLLPFFVMGLIAL, WNLYLNTLFWNLNYWDSISTLAG, ALFYAVIFVVVAYLYPLLAGT, AWLMWWVQSAAALSNMGMFVA, TPLAGILFSASGVLLLSMMSF, IVAAENFLYCFGMLLEFVAFI, TAGCVAMLVPPTALIAVVLAL, and LKVAVVSLGAVAMGLVLQPAL.

The protein belongs to the amino acid-polyamine-organocation (APC) superfamily. Polyamine:cation symporter (PHS) (TC 2.A.3.12) family. As to expression, expressed in seedling roots, leaves, stems, flowers and siliques.

The protein localises to the cell membrane. In terms of biological role, cell membrane polyamine/proton symporter involved in the polyamine uptake in cells. Possesses high affinity for spermidine and lower affinity for spermine and putrescine. Transports paraquat, a polyamine analog, and thus confers sensitivity to this chemical which is used as a herbicide. This chain is Polyamine transporter PUT1 (PUT1), found in Oryza sativa subsp. japonica (Rice).